The sequence spans 241 residues: DnaA regulatory inactivator Hda (241 aa).

Belongs to the DnaA family. HdA subfamily. As to quaternary structure, the active form seems to be an ADP-bound monomer. Forms the RIDA complex (regulatory inactivation of DnaA) of ATP-DnaA, ADP-Hda and the DNA-loaded beta sliding clamp (dnaN).

Functionally, mediates the interaction of DNA replication initiator protein DnaA with DNA polymerase subunit beta sliding clamp (dnaN). Stimulates hydrolysis of ATP-DnaA to ADP-DnaA, rendering DnaA inactive for reinitiation, a process called regulatory inhibition of DnaA or RIDA. The polypeptide is DnaA regulatory inactivator Hda (Salmonella arizonae (strain ATCC BAA-731 / CDC346-86 / RSK2980)).